A 375-amino-acid polypeptide reads, in one-letter code: Circadian-associated transcriptional repressor (375 aa).

Low complexity predominate over residues 1–32 (MDSPSSVSSYSSSSLSPSFSTSSVNSDFSFPS). 3 disordered regions span residues 1–102 (MDSP…LNTQ), 192–218 (KSSS…AASP), and 351–375 (DREM…DPQP). A compositionally biased stretch (basic and acidic residues) spans 33-46 (DNEREGKGTHELRP).

In terms of assembly, interacts with BMAL1, PER2, CRY2, BHLHE41, HDAC1 NR3C1.

The protein localises to the nucleus. The protein resides in the PML body. Its function is as follows. Transcriptional repressor which forms a negative regulatory component of the circadian clock and acts independently of the circadian transcriptional repressors: CRY1, CRY2 and BHLHE41. In a histone deacetylase-dependent manner represses the transcriptional activator activity of the CLOCK-BMAL1 heterodimer. Abrogates the interaction of BMAL1 with the transcriptional coactivator CREBBP and can repress the histone acetyl-transferase activity of the CLOCK-BMAL1 heterodimer, reducing histone acetylation of its target genes. Rhythmically binds the E-box elements (5'-CACGTG-3') on circadian gene promoters and its occupancy shows circadian oscillation antiphasic to BMAL1. Interacts with the glucocorticoid receptor (NR3C1) and contributes to the repressive function in the glucocorticoid response. The chain is Circadian-associated transcriptional repressor (Ciart) from Mus musculus (Mouse).